We begin with the raw amino-acid sequence, 124 residues long: Small ribosomal subunit protein bS6 (124 aa).

Residues 96–124 (ETAPSPMMKEVQREEARKAAQTTTEGQPA) form a disordered region. The segment covering 115–124 (AQTTTEGQPA) has biased composition (polar residues).

The protein belongs to the bacterial ribosomal protein bS6 family.

In terms of biological role, binds together with bS18 to 16S ribosomal RNA. This chain is Small ribosomal subunit protein bS6, found in Cupriavidus metallidurans (strain ATCC 43123 / DSM 2839 / NBRC 102507 / CH34) (Ralstonia metallidurans).